The sequence spans 447 residues: Rab GDP dissociation inhibitor alpha (447 aa).

This sequence belongs to the Rab GDI family. In terms of assembly, interacts with RHOH. Interacts with the non-phosphorylated forms of RAB1A, RAB3A, RAB5A, RAB5B, RAB5C, RAB8A, RAB8B, RAB10, RAB12, RAB35, and RAB43. In terms of tissue distribution, brain; predominant in neural and sensory tissues.

The protein localises to the cytoplasm. The protein resides in the golgi apparatus. Its subcellular location is the trans-Golgi network. Regulates the GDP/GTP exchange reaction of most Rab proteins by inhibiting the dissociation of GDP from them, and the subsequent binding of GTP to them. Promotes the dissociation of GDP-bound Rab proteins from the membrane and inhibits their activation. Promotes the dissociation of RAB1A, RAB3A, RAB5A and RAB10 from membranes. The protein is Rab GDP dissociation inhibitor alpha (GDI1) of Homo sapiens (Human).